The chain runs to 283 residues: 2-dehydro-3-deoxyphosphooctonate aldolase (283 aa).

Belongs to the KdsA family.

The protein resides in the cytoplasm. The catalysed reaction is D-arabinose 5-phosphate + phosphoenolpyruvate + H2O = 3-deoxy-alpha-D-manno-2-octulosonate-8-phosphate + phosphate. The protein operates within carbohydrate biosynthesis; 3-deoxy-D-manno-octulosonate biosynthesis; 3-deoxy-D-manno-octulosonate from D-ribulose 5-phosphate: step 2/3. Its pathway is bacterial outer membrane biogenesis; lipopolysaccharide biosynthesis. This chain is 2-dehydro-3-deoxyphosphooctonate aldolase, found in Methylococcus capsulatus (strain ATCC 33009 / NCIMB 11132 / Bath).